The chain runs to 337 residues: CMP-sialic acid transporter (337 aa).

Residues 1–9 are Cytoplasmic-facing; that stretch reads MAAPRDNVT. The helical transmembrane segment at 10–30 threads the bilayer; the sequence is LLFKLYCLAVMTLMAAVYTIA. Residues 31-45 lie on the Lumenal side of the membrane; sequence LRYTRTSDKELYFST. Residues 46–64 traverse the membrane as a helical segment; that stretch reads TAVCITEVIKLLLSVGILA. Residue lysine 55 participates in CMP-N-acetyl-beta-neuraminate binding. Over 65–87 the chain is Cytoplasmic; it reads KETGSLGRFKASLRENVLGSPKE. The helical transmembrane segment at 88–108 threads the bilayer; that stretch reads LLKLSVPSLVYAVQNNMAFLA. 101-102 serves as a coordination point for CMP-N-acetyl-beta-neuraminate; the sequence is QN. Over 109–114 the chain is Lumenal; that stretch reads LSNLDA. Residues 115–135 form a helical membrane-spanning segment; the sequence is AVYQVTYQLKIPCTALCTVLM. 117-124 provides a ligand contact to CMP-N-acetyl-beta-neuraminate; the sequence is YQVTYQLK. Over 136 to 141 the chain is Cytoplasmic; that stretch reads LNRTLS. Residues 142–160 traverse the membrane as a helical segment; that stretch reads KLQWVSVFMLCAGVTLVQW. The Lumenal portion of the chain corresponds to 161 to 175; that stretch reads KPAQATKVVVEQNPL. A helical transmembrane segment spans residues 176–196; it reads LGFGAIAIAVLCSGFAGVYFE. Serine 188 is a binding site for CMP-N-acetyl-beta-neuraminate. The Cytoplasmic portion of the chain corresponds to 197–209; that stretch reads KVLKSSDTSLWVR. A CMP-N-acetyl-beta-neuraminate-binding site is contributed by 210–214; the sequence is NIQMY. A helical transmembrane segment spans residues 210–228; it reads NIQMYLSGIIVTLAGVYLS. Over 229–243 the chain is Lumenal; the sequence is DGAEIKEKGFFYGYT. A helical transmembrane segment spans residues 244 to 262; that stretch reads YYVWFVIFLASVGGLYTSV. Residues 263-269 are Cytoplasmic-facing; the sequence is VVKYTDN. Residues 270–288 traverse the membrane as a helical segment; that stretch reads IMKGFSAAAAIVLSTIASV. Lysine 272 provides a ligand contact to CMP-N-acetyl-beta-neuraminate. Over 289-296 the chain is Lumenal; the sequence is MLFGLQIT. A helical transmembrane segment spans residues 297–315; it reads LTFALGTLLVCVSIYLYGL. Residues 316–337 lie on the Cytoplasmic side of the membrane; sequence PRQDTTSIQQGETASKERVIGV. The tract at residues 316 to 337 is disordered; the sequence is PRQDTTSIQQGETASKERVIGV.

It belongs to the nucleotide-sugar transporter family. SLC35A subfamily. As to quaternary structure, monomer.

It localises to the golgi apparatus membrane. The protein resides in the golgi apparatus. The catalysed reaction is CMP-N-acetyl-beta-neuraminate(in) + CMP(out) = CMP-N-acetyl-beta-neuraminate(out) + CMP(in). The enzyme catalyses CMP-N-acetyl-beta-neuraminate(in) + AMP(out) = CMP-N-acetyl-beta-neuraminate(out) + AMP(in). It carries out the reaction CDP-L-ribitol(in) + CDP(out) = CDP-L-ribitol(out) + CDP(in). It catalyses the reaction UMP(out) + CMP-N-acetyl-beta-neuraminate(in) = UMP(in) + CMP-N-acetyl-beta-neuraminate(out). Transports CMP-sialic acid from the cytosol into the Golgi apparatus, functioning as an antiporter that exchanges CMP-sialic acid for CMP. Binds both CMP-sialic acid and free CMP, but has higher affinity for free CMP. Also able to exchange CMP-sialic acid for AMP and UMP. Also mediates the transport of CDP-ribitol. The sequence is that of CMP-sialic acid transporter from Homo sapiens (Human).